The sequence spans 72 residues: Metallothionein-like protein type 2 A (72 aa).

The protein belongs to the metallothionein superfamily. Type 15 family. In terms of tissue distribution, leaves and roots.

Metallothioneins have a high content of cysteine residues that bind various heavy metals. This is Metallothionein-like protein type 2 A (MTA) from Solanum lycopersicum (Tomato).